The chain runs to 813 residues: Acyl-homoserine lactone acylase QuiP (813 aa).

The N-terminal stretch at methionine 1–alanine 26 is a signal peptide. Catalysis depends on serine 262, which acts as the Nucleophile.

The protein belongs to the peptidase S45 family. Heterodimer of an alpha subunit and a beta subunit processed from the same precursor.

The protein resides in the periplasm. It carries out the reaction an N-acyl-L-homoserine lactone + H2O = L-homoserine lactone + a carboxylate. Its function is as follows. Catalyzes the deacylation of acyl-homoserine lactone (AHL or acyl-HSL), releasing homoserine lactone (HSL) and the corresponding fatty acid. Possesses a specificity for the degradation of long-chain acyl-HSLs (side chains of seven or more carbons in length). The sequence is that of Acyl-homoserine lactone acylase QuiP (quiP) from Pseudomonas putida (strain ATCC 47054 / DSM 6125 / CFBP 8728 / NCIMB 11950 / KT2440).